The following is a 450-amino-acid chain: MYTKDTIVAIATPQGNGGIGIIRISGIDALEIAEKLTKKQLKPRYATFCNVYNDNEIIDHGIVIFFKAPLSYTGEDVVEIQAHGNPFILNLIIKAALNCGARIAKAGEFTERAFLNNKLDLAQAEAVADIINASSEIAAKSAAKSLQGDFSKEINNLLEKLIYLRMYVEASIDFPEEEINFLEDQKIHSSLEEIYKVILAIKNSCKQGVILAEGITLILVGKPNAGKSSLLNALAGKESAIVTSIAGTTRDIVKEHIQINGVPMHIIDTAGLRNSDDIIESEGIKRAIKKIQEADQVLFVTDDYTNSQVKFSDIKEIIPEFYDQIPKDIDITYVHNKIDLLKEVPHNHANHIYISAENNIGIDKLKEHILNKVGYTNQNESIYTARERHVTAINNAFEHIKLAKEQLELGNGELLAEELLIVQEYLNSITGEFSSDDLLGEIFSSFCIGK.

(6S)-5-formyl-5,6,7,8-tetrahydrofolate-binding residues include R23, E79, and K118. Positions 214-374 (GITLILVGKP…LKEHILNKVG (161 aa)) constitute a TrmE-type G domain. N224 provides a ligand contact to K(+). Residues 224 to 229 (NAGKSS), 243 to 249 (TSIAGTT), and 268 to 271 (DTAG) each bind GTP. S228 is a Mg(2+) binding site. K(+) contacts are provided by T243, I245, and T248. Residue T249 coordinates Mg(2+). K450 lines the (6S)-5-formyl-5,6,7,8-tetrahydrofolate pocket.

It belongs to the TRAFAC class TrmE-Era-EngA-EngB-Septin-like GTPase superfamily. TrmE GTPase family. In terms of assembly, homodimer. Heterotetramer of two MnmE and two MnmG subunits. K(+) serves as cofactor.

Its subcellular location is the cytoplasm. Its function is as follows. Exhibits a very high intrinsic GTPase hydrolysis rate. Involved in the addition of a carboxymethylaminomethyl (cmnm) group at the wobble position (U34) of certain tRNAs, forming tRNA-cmnm(5)s(2)U34. In Francisella tularensis subsp. holarctica (strain OSU18), this protein is tRNA modification GTPase MnmE.